Here is a 152-residue protein sequence, read N- to C-terminus: MFDLGWSELLVIGVVALIVVGPKDLPVLFRNVGRWVGKARGLAREFSRAMNDAADEAGVKDISKGLKAATNPVDAALDGVRKAATDFKTDLDPTKYNPDSETGKLAAERAEQAKKIQAATARVAAERRLREATAELEKAKDAEAALKPGPET.

Residues 1–21 (MFDLGWSELLVIGVVALIVVG) traverse the membrane as a helical segment.

This sequence belongs to the TatB family. As to quaternary structure, the Tat system comprises two distinct complexes: a TatABC complex, containing multiple copies of TatA, TatB and TatC subunits, and a separate TatA complex, containing only TatA subunits. Substrates initially bind to the TatABC complex, which probably triggers association of the separate TatA complex to form the active translocon.

It is found in the cell inner membrane. In terms of biological role, part of the twin-arginine translocation (Tat) system that transports large folded proteins containing a characteristic twin-arginine motif in their signal peptide across membranes. Together with TatC, TatB is part of a receptor directly interacting with Tat signal peptides. TatB may form an oligomeric binding site that transiently accommodates folded Tat precursor proteins before their translocation. The sequence is that of Sec-independent protein translocase protein TatB from Ruegeria pomeroyi (strain ATCC 700808 / DSM 15171 / DSS-3) (Silicibacter pomeroyi).